The following is a 160-amino-acid chain: Phosphopantetheine adenylyltransferase (160 aa).

Ser9 is a substrate binding site. ATP is bound by residues 9–10 (SF) and His17. Substrate is bound by residues Lys41, Ile73, and Lys87. Residues 88–90 (GLR), Glu98, and 122–128 (YSFVSSS) contribute to the ATP site.

It belongs to the bacterial CoaD family. In terms of assembly, homohexamer. Mg(2+) is required as a cofactor.

It is found in the cytoplasm. It carries out the reaction (R)-4'-phosphopantetheine + ATP + H(+) = 3'-dephospho-CoA + diphosphate. It participates in cofactor biosynthesis; coenzyme A biosynthesis; CoA from (R)-pantothenate: step 4/5. Reversibly transfers an adenylyl group from ATP to 4'-phosphopantetheine, yielding dephospho-CoA (dPCoA) and pyrophosphate. In Mycolicibacterium vanbaalenii (strain DSM 7251 / JCM 13017 / BCRC 16820 / KCTC 9966 / NRRL B-24157 / PYR-1) (Mycobacterium vanbaalenii), this protein is Phosphopantetheine adenylyltransferase.